The following is a 171-amino-acid chain: Ribosome maturation factor RimP (171 aa).

The protein belongs to the RimP family.

Its subcellular location is the cytoplasm. Required for maturation of 30S ribosomal subunits. This Anaeromyxobacter dehalogenans (strain 2CP-1 / ATCC BAA-258) protein is Ribosome maturation factor RimP.